The sequence spans 459 residues: Ribulose bisphosphate carboxylase large chain (459 aa).

N6,N6,N6-trimethyllysine is present on K4. Substrate contacts are provided by N113 and T163. The active-site Proton acceptor is K165. Substrate is bound at residue K167. 3 residues coordinate Mg(2+): K191, D193, and E194. K191 carries the N6-carboxylysine modification. The active-site Proton acceptor is the H284. Substrate is bound by residues R285, H317, and S369.

The protein belongs to the RuBisCO large chain family. Type I subfamily. Heterohexadecamer of 8 large chains and 8 small chains; disulfide-linked. The disulfide link is formed within the large subunit homodimers. The cofactor is Mg(2+). Post-translationally, the disulfide bond which can form in the large chain dimeric partners within the hexadecamer appears to be associated with oxidative stress and protein turnover.

Its subcellular location is the plastid. It is found in the chloroplast. The enzyme catalyses 2 (2R)-3-phosphoglycerate + 2 H(+) = D-ribulose 1,5-bisphosphate + CO2 + H2O. It carries out the reaction D-ribulose 1,5-bisphosphate + O2 = 2-phosphoglycolate + (2R)-3-phosphoglycerate + 2 H(+). RuBisCO catalyzes two reactions: the carboxylation of D-ribulose 1,5-bisphosphate, the primary event in carbon dioxide fixation, as well as the oxidative fragmentation of the pentose substrate in the photorespiration process. Both reactions occur simultaneously and in competition at the same active site. The polypeptide is Ribulose bisphosphate carboxylase large chain (Geum quellyon (Chilean avens)).